Reading from the N-terminus, the 106-residue chain is Cytochrome c (106 aa).

Heme c-binding residues include C17, C20, and H21. K75 is modified (N6,N6,N6-trimethyllysine). Residue M83 coordinates heme c.

Belongs to the cytochrome c family. In terms of processing, binds 1 heme c group covalently per subunit.

It is found in the mitochondrion intermembrane space. Functionally, electron carrier protein. The oxidized form of the cytochrome c heme group can accept an electron from the heme group of the cytochrome c1 subunit of cytochrome reductase. Cytochrome c then transfers this electron to the cytochrome oxidase complex, the final protein carrier in the mitochondrial electron-transport chain. The sequence is that of Cytochrome c (CYC1) from Gibberella zeae (strain ATCC MYA-4620 / CBS 123657 / FGSC 9075 / NRRL 31084 / PH-1) (Wheat head blight fungus).